Here is a 1064-residue protein sequence, read N- to C-terminus: Isoleucine--tRNA ligase, cytoplasmic (1064 aa).

A 'HIGH' region motif is present at residues 42 to 52 (PFATGRPHHGH). Positions 597–601 (KMSKR) match the 'KMSKS' region motif. An ATP-binding site is contributed by lysine 600.

It belongs to the class-I aminoacyl-tRNA synthetase family.

The protein localises to the cytoplasm. The enzyme catalyses tRNA(Ile) + L-isoleucine + ATP = L-isoleucyl-tRNA(Ile) + AMP + diphosphate. In Schizosaccharomyces pombe (strain 972 / ATCC 24843) (Fission yeast), this protein is Isoleucine--tRNA ligase, cytoplasmic (irs1).